The primary structure comprises 483 residues: Zinc metalloproteinase/disintegrin (483 aa).

A signal peptide spans 1-20 (MIQVLLVTLCLAAFPYQGNS). Positions 21 to 191 (IILESGNVND…KASQLNLTPE (171 aa)) are excised as a propeptide. The Peptidase M12B domain maps to 198–394 (RYIELVVVAD…HNPQCMLNEP (197 aa)). Positions 201 and 285 each coordinate Ca(2+). 3 cysteine pairs are disulfide-bonded: Cys-309-Cys-389, Cys-349-Cys-373, and Cys-351-Cys-356. His-334 is a Zn(2+) binding site. Glu-335 is a catalytic residue. 2 residues coordinate Zn(2+): His-338 and His-344. Ca(2+) contacts are provided by Cys-389 and Asn-392. Positions 395–414 (LRTDIVSTPVSGNELWETGE) are excised as a propeptide. A Disintegrin domain is found at 402–483 (TPVSGNELWE…AGCPRNPFHA (82 aa)). 4 disulfide bridges follow: Cys-425-Cys-448, Cys-439-Cys-445, Cys-444-Cys-469, and Cys-457-Cys-476. Residues 461-463 (KGD) carry the Cell attachment site; atypical (KGD) motif.

It belongs to the venom metalloproteinase (M12B) family. P-II subfamily. P-IIe sub-subfamily. Heterodimer with piscivostatin-alpha; disulfide-linked (disintegrin). The cofactor is Zn(2+). As to expression, expressed by the venom gland.

Its subcellular location is the secreted. In terms of biological role, impairs hemostasis in the envenomed animal. Functionally, inhibits platelet aggregation induced by ADP. Acts by inhibiting fibrinogen interaction with platelet receptors GPIIb/GPIIIa (ITGA2B/ITGB3). Also inhibits platelet aggregate dissociation in human platelet-rich plasma. In Agkistrodon piscivorus piscivorus (Eastern cottonmouth), this protein is Zinc metalloproteinase/disintegrin.